The following is a 235-amino-acid chain: MINTLPAFWAVIPAAGVGARMAADRPKQYLELAGQTLLEHSLDCFLGHPALAGVVVSIADDDPYWPGLRYASDPRIQRAAGGRERADSVLNALLVLHAQGASDSDWVLVHDAARPNLARSDLDKLLSELADDPVGGLLAVPARDTLKRADGNGRVSATVDRSTIWQAYTPQMFRLGALHRALAECLVSDVVVTDEASAIEWSGQAPRLVEGRSDNIKVTRPEDLEWLRQRWAGRR.

It belongs to the IspD/TarI cytidylyltransferase family. IspD subfamily.

The catalysed reaction is 2-C-methyl-D-erythritol 4-phosphate + CTP + H(+) = 4-CDP-2-C-methyl-D-erythritol + diphosphate. It functions in the pathway isoprenoid biosynthesis; isopentenyl diphosphate biosynthesis via DXP pathway; isopentenyl diphosphate from 1-deoxy-D-xylulose 5-phosphate: step 2/6. Catalyzes the formation of 4-diphosphocytidyl-2-C-methyl-D-erythritol from CTP and 2-C-methyl-D-erythritol 4-phosphate (MEP). In Pseudomonas putida (strain GB-1), this protein is 2-C-methyl-D-erythritol 4-phosphate cytidylyltransferase.